Consider the following 129-residue polypeptide: DNA-directed RNA polymerase subunit omega (129 aa).

A disordered region spans residues 76–101 (EVDEPEPDPVTLAASAADGEDDDQPE).

The protein belongs to the RNA polymerase subunit omega family. In terms of assembly, the RNAP catalytic core consists of 2 alpha, 1 beta, 1 beta' and 1 omega subunit. When a sigma factor is associated with the core the holoenzyme is formed, which can initiate transcription.

The enzyme catalyses RNA(n) + a ribonucleoside 5'-triphosphate = RNA(n+1) + diphosphate. Its function is as follows. Promotes RNA polymerase assembly. Latches the N- and C-terminal regions of the beta' subunit thereby facilitating its interaction with the beta and alpha subunits. The sequence is that of DNA-directed RNA polymerase subunit omega from Agrobacterium fabrum (strain C58 / ATCC 33970) (Agrobacterium tumefaciens (strain C58)).